The following is a 238-amino-acid chain: Ribonuclease PH (238 aa).

Residues R86 and 124-126 contribute to the phosphate site; that span reads GTR.

It belongs to the RNase PH family. In terms of assembly, homohexameric ring arranged as a trimer of dimers.

It catalyses the reaction tRNA(n+1) + phosphate = tRNA(n) + a ribonucleoside 5'-diphosphate. In terms of biological role, phosphorolytic 3'-5' exoribonuclease that plays an important role in tRNA 3'-end maturation. Removes nucleotide residues following the 3'-CCA terminus of tRNAs; can also add nucleotides to the ends of RNA molecules by using nucleoside diphosphates as substrates, but this may not be physiologically important. Probably plays a role in initiation of 16S rRNA degradation (leading to ribosome degradation) during starvation. In Geotalea daltonii (strain DSM 22248 / JCM 15807 / FRC-32) (Geobacter daltonii), this protein is Ribonuclease PH.